A 514-amino-acid chain; its full sequence is 1-pyrroline-5-carboxylate dehydrogenase (514 aa).

Catalysis depends on residues Glu-286 and Cys-320.

Belongs to the aldehyde dehydrogenase family. RocA subfamily.

The catalysed reaction is L-glutamate 5-semialdehyde + NAD(+) + H2O = L-glutamate + NADH + 2 H(+). It participates in amino-acid degradation; L-proline degradation into L-glutamate; L-glutamate from L-proline: step 2/2. The protein is 1-pyrroline-5-carboxylate dehydrogenase of Staphylococcus aureus (strain MSSA476).